The chain runs to 297 residues: Transmembrane protein 178A (297 aa).

The first 25 residues, 1–25 (MEPRALVTALSLGLSLCSLGLLVTA), serve as a signal peptide directing secretion. The Extracellular segment spans residues 26–179 (IFTDHWYETD…LLHLRRITAG (154 aa)). Residues 41 to 57 (ESCERSRAGADPPDQKN) show a composition bias toward basic and acidic residues. Residues 41–84 (ESCERSRAGADPPDQKNRLMPLSHLPLRDSPPLGRRLLPGGPGR) are disordered. Residues 68-79 (RDSPPLGRRLLP) show a composition bias toward low complexity. N-linked (GlcNAc...) asparagine glycosylation occurs at asparagine 158. The helical transmembrane segment at 180 to 200 (FLGMAVAVLLCGCIVATVSFF) threads the bilayer. Over 201–208 (WEESLTQH) the chain is Cytoplasmic. Residues 209 to 229 (VAGLLFLMTGIFCTISLCTYA) form a helical membrane-spanning segment. Over 230 to 257 (ASISYDLNRLPKLIYSLPADVEHGYSWS) the chain is Extracellular. A helical transmembrane segment spans residues 258–278 (IFCAWCSLGFIVAAGGLCIAY). Residues 279 to 297 (PFISRTKIAQLKSGRDSTV) lie on the Cytoplasmic side of the membrane.

It belongs to the TMEM178 family. In terms of assembly, interacts with STIM1.

It localises to the endoplasmic reticulum membrane. Functionally, acts as a negative regulator of osteoclast differentiation in basal and inflammatory conditions by regulating TNFSF11-induced Ca (2+) fluxes, thereby controlling the induction of NFATC1. The sequence is that of Transmembrane protein 178A (TMEM178A) from Homo sapiens (Human).